Reading from the N-terminus, the 490-residue chain is Serine/threonine-protein kinase BSK6 (490 aa).

Gly2 carries the N-myristoyl glycine lipid modification. Residue Ser25 is modified to Phosphoserine. The region spanning 56-310 is the Protein kinase domain; the sequence is DNIVSEHGEK…KSLVTSLVTL (255 aa). Residues 62–70 and Lys84 each bind ATP; that span reads HGEKAPNVV. Residue Asp178 is the Proton acceptor of the active site. Ser373 carries the phosphoserine modification.

The protein belongs to the protein kinase superfamily. Ser/Thr protein kinase family. In terms of assembly, interacts with BRI1, ASK7/BIN2, ASK9/BIL2, BSK1, BSK5, BSK8 and BSK11. Phosphorylated by BRI1, ASK7/BIN2 and ASK9/BIL2.

Its subcellular location is the cell membrane. It carries out the reaction L-seryl-[protein] + ATP = O-phospho-L-seryl-[protein] + ADP + H(+). The enzyme catalyses L-threonyl-[protein] + ATP = O-phospho-L-threonyl-[protein] + ADP + H(+). Probable serine/threonine kinase that acts as a positive regulator of brassinosteroid (BR) signaling downstream of the receptor kinase BRI1. Functions redundantly with BSK3, BSK4, BSK7 and BSK8. In Arabidopsis thaliana (Mouse-ear cress), this protein is Serine/threonine-protein kinase BSK6.